Here is a 274-residue protein sequence, read N- to C-terminus: NAD kinase (274 aa).

Asp61 (proton acceptor) is an active-site residue. Residues 61-62 (DG), Lys66, 134-135 (ND), Lys145, Asp164, and 175-180 (TAYSLS) each bind NAD(+).

Belongs to the NAD kinase family. It depends on a divalent metal cation as a cofactor.

It is found in the cytoplasm. The catalysed reaction is NAD(+) + ATP = ADP + NADP(+) + H(+). Its function is as follows. Involved in the regulation of the intracellular balance of NAD and NADP, and is a key enzyme in the biosynthesis of NADP. Catalyzes specifically the phosphorylation on 2'-hydroxyl of the adenosine moiety of NAD to yield NADP. In Clostridium tetani (strain Massachusetts / E88), this protein is NAD kinase.